A 101-amino-acid polypeptide reads, in one-letter code: Pro-corazonin (101 aa).

The N-terminal stretch at 1–19 (MVTNITLILTLMTLASVTA) is a signal peptide. Gln-20 is subject to Pyrrolidone carboxylic acid. Asn-30 carries the post-translational modification Asparagine amide.

It belongs to the corazonin family.

The protein localises to the secreted. Functionally, cardioactive peptide. Corazonin is probably involved in the physiological regulation of the heart beat. The polypeptide is Pro-corazonin (crz) (Bombyx mori (Silk moth)).